A 120-amino-acid chain; its full sequence is Ribosome-binding factor A (120 aa).

This sequence belongs to the RbfA family. Monomer. Binds 30S ribosomal subunits, but not 50S ribosomal subunits or 70S ribosomes.

The protein resides in the cytoplasm. Functionally, one of several proteins that assist in the late maturation steps of the functional core of the 30S ribosomal subunit. Associates with free 30S ribosomal subunits (but not with 30S subunits that are part of 70S ribosomes or polysomes). Required for efficient processing of 16S rRNA. May interact with the 5'-terminal helix region of 16S rRNA. This is Ribosome-binding factor A from Borreliella burgdorferi (strain ATCC 35210 / DSM 4680 / CIP 102532 / B31) (Borrelia burgdorferi).